The primary structure comprises 287 residues: Acetylglutamate kinase (287 aa).

Substrate contacts are provided by residues G65–G66, R87, and N181.

It belongs to the acetylglutamate kinase family. ArgB subfamily.

The protein resides in the cytoplasm. The catalysed reaction is N-acetyl-L-glutamate + ATP = N-acetyl-L-glutamyl 5-phosphate + ADP. The protein operates within amino-acid biosynthesis; L-arginine biosynthesis; N(2)-acetyl-L-ornithine from L-glutamate: step 2/4. Catalyzes the ATP-dependent phosphorylation of N-acetyl-L-glutamate. The chain is Acetylglutamate kinase from Syntrophomonas wolfei subsp. wolfei (strain DSM 2245B / Goettingen).